The sequence spans 281 residues: MVVVGKIHEMKDIVKKLKKEGKTIGFVPTMGYLHEGHLSLVRKSKSQNDITIMSIFVNPIQFGPNEDYDRYPRDFERDKNLAEKEGVDYVFYPSVKEMYPDDFKTVVSVKKITDIMCGKSRPGHFDGVATVVLKLFNIVNPDRAYFGQKDAQQLAVIKQMVKDLNLDVEIVPCPIVREEDGLAMSSRNTYLSGDERKSATVLYRALNLAKDLIEKGERNVSKLKKAMEDLILKEKYTKIDYIEFVNYDTFEPISKVEGKVLIALAVFVGTTRLIDNIVVEV.

30–37 (MGYLHEGH) serves as a coordination point for ATP. The active-site Proton donor is His37. Gln61 lines the (R)-pantoate pocket. Residue Gln61 coordinates beta-alanine. 147 to 150 (GQKD) is a binding site for ATP. Residue Gln153 participates in (R)-pantoate binding. ATP-binding positions include Val176 and 184-187 (MSSR).

The protein belongs to the pantothenate synthetase family. As to quaternary structure, homodimer.

The protein localises to the cytoplasm. The catalysed reaction is (R)-pantoate + beta-alanine + ATP = (R)-pantothenate + AMP + diphosphate + H(+). The protein operates within cofactor biosynthesis; (R)-pantothenate biosynthesis; (R)-pantothenate from (R)-pantoate and beta-alanine: step 1/1. In terms of biological role, catalyzes the condensation of pantoate with beta-alanine in an ATP-dependent reaction via a pantoyl-adenylate intermediate. This Caldicellulosiruptor saccharolyticus (strain ATCC 43494 / DSM 8903 / Tp8T 6331) protein is Pantothenate synthetase.